A 142-amino-acid polypeptide reads, in one-letter code: Transcriptional regulator MraZ (142 aa).

2 SpoVT-AbrB domains span residues 5 to 51 and 77 to 120; these read ASAL…PRPE and AADV…DAAT.

The protein belongs to the MraZ family. As to quaternary structure, forms oligomers.

Its subcellular location is the cytoplasm. It is found in the nucleoid. This chain is Transcriptional regulator MraZ, found in Ralstonia pickettii (strain 12J).